We begin with the raw amino-acid sequence, 205 residues long: Holliday junction branch migration complex subunit RuvA (205 aa).

A domain I region spans residues 1 to 64 (MIGRLRGTLA…EDAHLLYGFA (64 aa)). The interval 65 to 143 (EKRERELFRE…AWETSPAMFT (79 aa)) is domain II. The tract at residues 144 to 154 (LVSDGPLPVAS) is flexible linker. The tract at residues 154 to 205 (SESSAEADAVSALVSLGYKPQEASKAIAAIKDKAGLSSEELIRRSLKGMIAK) is domain III.

It belongs to the RuvA family. As to quaternary structure, homotetramer. Forms an RuvA(8)-RuvB(12)-Holliday junction (HJ) complex. HJ DNA is sandwiched between 2 RuvA tetramers; dsDNA enters through RuvA and exits via RuvB. An RuvB hexamer assembles on each DNA strand where it exits the tetramer. Each RuvB hexamer is contacted by two RuvA subunits (via domain III) on 2 adjacent RuvB subunits; this complex drives branch migration. In the full resolvosome a probable DNA-RuvA(4)-RuvB(12)-RuvC(2) complex forms which resolves the HJ.

The protein resides in the cytoplasm. The RuvA-RuvB-RuvC complex processes Holliday junction (HJ) DNA during genetic recombination and DNA repair, while the RuvA-RuvB complex plays an important role in the rescue of blocked DNA replication forks via replication fork reversal (RFR). RuvA specifically binds to HJ cruciform DNA, conferring on it an open structure. The RuvB hexamer acts as an ATP-dependent pump, pulling dsDNA into and through the RuvAB complex. HJ branch migration allows RuvC to scan DNA until it finds its consensus sequence, where it cleaves and resolves the cruciform DNA. In Pseudomonas entomophila (strain L48), this protein is Holliday junction branch migration complex subunit RuvA.